We begin with the raw amino-acid sequence, 326 residues long: WRKY transcription factor 8 (326 aa).

The tract at residues 115-172 is disordered; it reads VRVSASPSSSEADHHPGEDSGKIRKKREVRDGGEDDQRSQKVVKTKKKEEKKKEPRVS. Composition is skewed to basic and acidic residues over residues 125–153 and 161–170; these read EADH…DQRS and KKEEKKKEPR. A DNA-binding region (WRKY) is located at residues 177 to 242; that stretch reads TEVDHLEDGY…YESQHNHPIP (66 aa).

Belongs to the WRKY group II-c family. In terms of assembly, interacts with VQ9 (via N-terminus). Highly expressed in roots and at lower levels in rosette leaves, cauline leaves, stems, flowers and siliques.

The protein localises to the nucleus. Transcription factor. Interacts specifically with the W box (5'-TTGAC[CT]-3'), a frequently occurring stress-responsive cis-acting element. Functions as a positive regulator of salt stress response. Binds the W box of LTI78/RD29A stress-response gene and directly regulates its transcription under salt stress. Functions antagonistically with VQ9 to regulate sodium and potassium homeostasis under salt stress by regulating the expression of downstream SOS (SALT OVERLY SENSITIVE) stress-responsive genes. The DNA-binding activity of WRKY8 is decreased by VQ9. Functions as a negative regulator of basal resistance to the bacterial pathogen P.syringae and as positive regulator of resistance to the fungal pathogen to B.cinerea. Functions as a positive regulator of defense response againt tobamovirus (TMV) by regulating both the abscisic acid and ethylene signaling pathways. Positively regulates ABI4 expression and negatively modulates ACS6 and ERF104 expression by directly binding to the W box consensus motifs within their promoters. This chain is WRKY transcription factor 8 (WRKY8), found in Arabidopsis thaliana (Mouse-ear cress).